The following is a 496-amino-acid chain: L-arabinose isomerase (496 aa).

Mn(2+) is bound by residues Glu302, Glu329, His346, and His445.

The protein belongs to the arabinose isomerase family. Requires Mn(2+) as cofactor.

It carries out the reaction beta-L-arabinopyranose = L-ribulose. It functions in the pathway carbohydrate degradation; L-arabinose degradation via L-ribulose; D-xylulose 5-phosphate from L-arabinose (bacterial route): step 1/3. Functionally, catalyzes the conversion of L-arabinose to L-ribulose. This is L-arabinose isomerase from Thermotoga neapolitana (strain ATCC 49049 / DSM 4359 / NBRC 107923 / NS-E).